A 345-amino-acid chain; its full sequence is Uroporphyrinogen decarboxylase (345 aa).

Substrate-binding positions include 27 to 31, F46, D76, Y152, S207, and H321; that span reads RQAGR.

This sequence belongs to the uroporphyrinogen decarboxylase family. As to quaternary structure, homodimer.

The protein localises to the cytoplasm. The enzyme catalyses uroporphyrinogen III + 4 H(+) = coproporphyrinogen III + 4 CO2. It participates in porphyrin-containing compound metabolism; protoporphyrin-IX biosynthesis; coproporphyrinogen-III from 5-aminolevulinate: step 4/4. Catalyzes the decarboxylation of four acetate groups of uroporphyrinogen-III to yield coproporphyrinogen-III. This Staphylococcus aureus (strain Mu3 / ATCC 700698) protein is Uroporphyrinogen decarboxylase.